The sequence spans 500 residues: Lysine--tRNA ligase (500 aa).

The Mg(2+) site is built by E410 and E417.

This sequence belongs to the class-II aminoacyl-tRNA synthetase family. Homodimer. Requires Mg(2+) as cofactor.

It is found in the cytoplasm. The catalysed reaction is tRNA(Lys) + L-lysine + ATP = L-lysyl-tRNA(Lys) + AMP + diphosphate. The polypeptide is Lysine--tRNA ligase (Mycoplasma capricolum subsp. capricolum (strain California kid / ATCC 27343 / NCTC 10154)).